A 128-amino-acid chain; its full sequence is Class I hydrophobin 19 (128 aa).

4 disulfides stabilise this stretch: cysteine 48–cysteine 107, cysteine 55–cysteine 101, cysteine 56–cysteine 88, and cysteine 108–cysteine 121. Asparagine 110 carries N-linked (GlcNAc...) asparagine glycosylation.

This sequence belongs to the fungal hydrophobin family. Self-assembles to form functional amyloid fibrils called rodlets. Self-assembly into fibrillar rodlets occurs spontaneously at hydrophobic:hydrophilic interfaces and the rodlets further associate laterally to form amphipathic monolayers.

Its subcellular location is the secreted. It localises to the cell wall. Functionally, aerial growth, conidiation, and dispersal of filamentous fungi in the environment rely upon a capability of their secreting small amphipathic proteins called hydrophobins (HPBs) with low sequence identity. Class I can self-assemble into an outermost layer of rodlet bundles on aerial cell surfaces, conferring cellular hydrophobicity that supports fungal growth, development and dispersal; whereas Class II form highly ordered films at water-air interfaces through intermolecular interactions but contribute nothing to the rodlet structure. This Pleurotus ostreatus (strain PC15) (Oyster mushroom) protein is Class I hydrophobin 19.